Reading from the N-terminus, the 340-residue chain is Ras association domain-containing protein 1 (340 aa).

Serine 2 carries the N-acetylserine modification. A Phosphoserine modification is found at serine 2. The mediates interaction with E4F1 stretch occupies residues 2–115; the sequence is SAEPELIELR…DLGWDSALER (114 aa). The Phorbol-ester/DAG-type zinc finger occupies 51-101; sequence GHRFQPAGPTTHTWCDLCGDFIWGVVRKGLQCAHCKFTCHYRCRALVCLDC. The span at 175–185 shows a compositional bias: low complexity; that stretch reads SVPSSKKPPSL. The disordered stretch occupies residues 175–196; the sequence is SVPSSKKPPSLQDARRGTGRST. The Ras-associating domain maps to 194–288; sequence RSTAVKRRTS…LSFVLKENDS (95 aa). Residues 290 to 337 form the SARAH domain; sequence EVNWDAFSMPELHNFLRILQREEEEHLRQILQKYSRCRQKIQEALHAC. Positions 311–314 are MOAP1-binding; it reads EEEE.

As to quaternary structure, interacts with MAP1S and XPA. Binds to the N-terminal of CDC20 during prometaphase. Binds to STK3/MST2 and STK4/MST1. Recruited to the TNFRSF1A and TNFRSF10A complexes in response to their respective cognate ligand, after internalization. Can self-associate. Part of a complex with MDM2, DAXX, RASSF1 and USP7. In terms of assembly, interacts with MOAP1 and E4F1. Interacts with RSSF5 and probably associates with HRAS via a RSSF1 isoform A-RSSF5 heterodimer. Interacts (via C-terminus) with DAXX (via N-terminus); the interaction is independent of MDM2 and TP53. Interacts (via N-terminus) with MDM2 (via C-terminus); the interaction is independent of TP53. Interacts with RAB39A. Interacts with RAB39B; the interaction is weak. Interacts with ECM2. Interacts with RAB39B; the interaction is strong. Does not interact with RAB39A.

It localises to the cytoplasm. It is found in the cytoskeleton. The protein resides in the microtubule organizing center. The protein localises to the centrosome. Its subcellular location is the spindle. It localises to the spindle pole. It is found in the nucleus. Functionally, potential tumor suppressor. Required for death receptor-dependent apoptosis. Mediates activation of Mediates activation of STK3/MST2 and STK4/MST1 during Fas-induced apoptosis by preventing their dephosphorylation. When associated with MOAP1, promotes BAX conformational change and translocation to mitochondrial membranes in response to TNF and TNFSF10 stimulation. Isoform A interacts with CDC20, an activator of the anaphase-promoting complex, APC, resulting in the inhibition of APC activity and mitotic progression. Inhibits proliferation by negatively regulating cell cycle progression at the level of G1/S-phase transition by regulating accumulation of cyclin D1 protein. Isoform C has been shown not to perform these roles, no function has been identified for this isoform. Isoform A disrupts interactions among MDM2, DAXX and USP7, thus contributing to the efficient activation of TP53 by promoting MDM2 self-ubiquitination in cell-cycle checkpoint control in response to DNA damage. In Mus musculus (Mouse), this protein is Ras association domain-containing protein 1.